A 494-amino-acid chain; its full sequence is Tripartite motif-containing protein 5 (494 aa).

Position 2 is an N-acetylalanine (A2). Residues 15–59 form an RING-type zinc finger; that stretch reads CPICLELLTQPLSLDCGHSFCQACLTANHKTSMPDEGERSCPVCR. The residue at position 86 (S86) is a Phosphoserine. A B box-type zinc finger spans residues 91-133; sequence QKVDHCARHGEKLLLFCQEDRKVICWLCERSQEHRGHHTFLTE. Residues C96, H99, C118, and H124 each contribute to the Zn(2+) site. The stretch at 132–241 forms a coiled coil; sequence TEEVAQEYQV…LISDLEHRLQ (110 aa). The tract at residues 186–199 is required for interaction with GABARAP and for autophagy; it reads FEQLRHILDWVESN. The B30.2/SPRY domain maps to 282-494; it reads LKVMLEVLRE…VPMTLCSPSS (213 aa).

This sequence belongs to the TRIM/RBCC family. In terms of assembly, can form homodimers and homotrimers. In addition to lower-order dimerization, also exhibits a higher-order multimerization and both low- and high-order multimerizations are essential for its restriction activity. Interacts with BTBD1 and BTBD2. Interacts with PSMC4, PSMC5, PSMD7 and HSPA8/HSC70. Interacts (via B30.2/SPRY domain) with HSPA1A/B. Interacts with PSMC2, MAP3K7/TAK1, TAB2 and TAB3. Interacts with SQSTM1. Interacts with TRIM6 and TRIM34. Interacts with ULK1 (phosphorylated form), GABARAP, GABARAPL1, GABARAPL2, MAP1LC3A, MAP1LC3C and BECN1. In terms of processing, degraded in a proteasome-independent fashion in the absence of viral infection but in a proteasome-dependent fashion following exposure to restriction sensitive virus. Autoubiquitinated in a RING finger- and UBE2D2-dependent manner. Monoubiquitinated by TRIM21. Deubiquitinated by Yersinia YopJ. Ubiquitination may not lead to proteasomal degradation.

The protein localises to the cytoplasm. It is found in the nucleus. The enzyme catalyses S-ubiquitinyl-[E2 ubiquitin-conjugating enzyme]-L-cysteine + [acceptor protein]-L-lysine = [E2 ubiquitin-conjugating enzyme]-L-cysteine + N(6)-ubiquitinyl-[acceptor protein]-L-lysine.. The protein operates within protein modification; protein ubiquitination. In terms of biological role, capsid-specific restriction factor that prevents infection from non-host-adapted retroviruses. Blocks viral replication early in the life cycle, after viral entry but before reverse transcription. In addition to acting as a capsid-specific restriction factor, also acts as a pattern recognition receptor that activates innate immune signaling in response to the retroviral capsid lattice. Binding to the viral capsid triggers its E3 ubiquitin ligase activity, and in concert with the heterodimeric ubiquitin conjugating enzyme complex UBE2V1-UBE2N (also known as UBC13-UEV1A complex) generates 'Lys-63'-linked polyubiquitin chains, which in turn are catalysts in the autophosphorylation of the MAP3K7/TAK1 complex (includes TAK1, TAB2, and TAB3). Activation of the MAP3K7/TAK1 complex by autophosphorylation results in the induction and expression of NF-kappa-B and MAPK-responsive inflammatory genes, thereby leading to an innate immune response in the infected cell. Plays a role in regulating autophagy through activation of autophagy regulator BECN1 by causing its dissociation from its inhibitors BCL2 and TAB2. This Symphalangus syndactylus (Siamang) protein is Tripartite motif-containing protein 5 (TRIM5).